The chain runs to 114 residues: uncharacterized protein (114 aa).

2 helical membrane-spanning segments follow: residues 58–78 and 94–114; these read CLLG…FFLL and SISY…FCLA.

It is found in the membrane. This is an uncharacterized protein from Saccharomyces cerevisiae (strain ATCC 204508 / S288c) (Baker's yeast).